A 220-amino-acid chain; its full sequence is Ribose-5-phosphate isomerase A (220 aa).

Substrate contacts are provided by residues 28 to 31 (TGST), 81 to 84 (DGAD), and 94 to 97 (KGGG). Residue glutamate 103 is the Proton acceptor of the active site. Lysine 121 contributes to the substrate binding site.

The protein belongs to the ribose 5-phosphate isomerase family. In terms of assembly, homodimer.

The enzyme catalyses aldehydo-D-ribose 5-phosphate = D-ribulose 5-phosphate. It participates in carbohydrate degradation; pentose phosphate pathway; D-ribose 5-phosphate from D-ribulose 5-phosphate (non-oxidative stage): step 1/1. Its function is as follows. Catalyzes the reversible conversion of ribose-5-phosphate to ribulose 5-phosphate. The sequence is that of Ribose-5-phosphate isomerase A from Shewanella baltica (strain OS223).